We begin with the raw amino-acid sequence, 179 residues long: Large ribosomal subunit protein uL5 (179 aa).

The protein belongs to the universal ribosomal protein uL5 family. As to quaternary structure, part of the 50S ribosomal subunit; part of the 5S rRNA/L5/L18/L25 subcomplex. Contacts the 5S rRNA and the P site tRNA. Forms a bridge to the 30S subunit in the 70S ribosome.

Functionally, this is one of the proteins that bind and probably mediate the attachment of the 5S RNA into the large ribosomal subunit, where it forms part of the central protuberance. In the 70S ribosome it contacts protein S13 of the 30S subunit (bridge B1b), connecting the 2 subunits; this bridge is implicated in subunit movement. Contacts the P site tRNA; the 5S rRNA and some of its associated proteins might help stabilize positioning of ribosome-bound tRNAs. This chain is Large ribosomal subunit protein uL5, found in Desulforapulum autotrophicum (strain ATCC 43914 / DSM 3382 / VKM B-1955 / HRM2) (Desulfobacterium autotrophicum).